A 130-amino-acid chain; its full sequence is Peptide methionine sulfoxide reductase MsrB (130 aa).

In terms of domain architecture, MsrB spans L8–R130. Residues C47, C50, C96, and C99 each contribute to the Zn(2+) site. Residue C119 is the Nucleophile of the active site.

Belongs to the MsrB Met sulfoxide reductase family. Requires Zn(2+) as cofactor.

The catalysed reaction is L-methionyl-[protein] + [thioredoxin]-disulfide + H2O = L-methionyl-(R)-S-oxide-[protein] + [thioredoxin]-dithiol. The polypeptide is Peptide methionine sulfoxide reductase MsrB (Pseudomonas fluorescens (strain ATCC BAA-477 / NRRL B-23932 / Pf-5)).